The primary structure comprises 258 residues: Acyl-[acyl-carrier-protein]--UDP-N-acetylglucosamine O-acyltransferase (258 aa).

The protein belongs to the transferase hexapeptide repeat family. LpxA subfamily. As to quaternary structure, homotrimer.

It localises to the cytoplasm. The catalysed reaction is a (3R)-hydroxyacyl-[ACP] + UDP-N-acetyl-alpha-D-glucosamine = a UDP-3-O-[(3R)-3-hydroxyacyl]-N-acetyl-alpha-D-glucosamine + holo-[ACP]. It functions in the pathway glycolipid biosynthesis; lipid IV(A) biosynthesis; lipid IV(A) from (3R)-3-hydroxytetradecanoyl-[acyl-carrier-protein] and UDP-N-acetyl-alpha-D-glucosamine: step 1/6. Its function is as follows. Involved in the biosynthesis of lipid A, a phosphorylated glycolipid that anchors the lipopolysaccharide to the outer membrane of the cell. The polypeptide is Acyl-[acyl-carrier-protein]--UDP-N-acetylglucosamine O-acyltransferase (Pseudomonas fluorescens (strain ATCC BAA-477 / NRRL B-23932 / Pf-5)).